The primary structure comprises 160 residues: 2-C-methyl-D-erythritol 2,4-cyclodiphosphate synthase (160 aa).

Positions 9 and 11 each coordinate a divalent metal cation. 4-CDP-2-C-methyl-D-erythritol 2-phosphate is bound by residues 9–11 and 35–36; these read DVH and HS. An a divalent metal cation-binding site is contributed by histidine 43. 4-CDP-2-C-methyl-D-erythritol 2-phosphate contacts are provided by residues 57 to 59, 62 to 66, 101 to 107, 133 to 136, phenylalanine 140, and arginine 143; these read DIG, FPDTD, AQKPKMA, and TTTE.

The protein belongs to the IspF family. Homotrimer. Requires a divalent metal cation as cofactor.

It carries out the reaction 4-CDP-2-C-methyl-D-erythritol 2-phosphate = 2-C-methyl-D-erythritol 2,4-cyclic diphosphate + CMP. It functions in the pathway isoprenoid biosynthesis; isopentenyl diphosphate biosynthesis via DXP pathway; isopentenyl diphosphate from 1-deoxy-D-xylulose 5-phosphate: step 4/6. In terms of biological role, involved in the biosynthesis of isopentenyl diphosphate (IPP) and dimethylallyl diphosphate (DMAPP), two major building blocks of isoprenoid compounds. Catalyzes the conversion of 4-diphosphocytidyl-2-C-methyl-D-erythritol 2-phosphate (CDP-ME2P) to 2-C-methyl-D-erythritol 2,4-cyclodiphosphate (ME-CPP) with a corresponding release of cytidine 5-monophosphate (CMP). This Geobacillus thermodenitrificans (strain NG80-2) protein is 2-C-methyl-D-erythritol 2,4-cyclodiphosphate synthase.